Consider the following 273-residue polypeptide: Dermonecrotic toxin LsaSicTox-alphaIB1bi (273 aa).

H5 is a catalytic residue. Residues E25 and D27 each contribute to the Mg(2+) site. H41 functions as the Nucleophile in the catalytic mechanism. 2 disulfides stabilise this stretch: C45–C51 and C47–C190. Residue D85 participates in Mg(2+) binding.

The protein belongs to the arthropod phospholipase D family. Class II subfamily. Mg(2+) is required as a cofactor. In terms of tissue distribution, expressed by the venom gland.

The protein localises to the secreted. It catalyses the reaction an N-(acyl)-sphingosylphosphocholine = an N-(acyl)-sphingosyl-1,3-cyclic phosphate + choline. It carries out the reaction an N-(acyl)-sphingosylphosphoethanolamine = an N-(acyl)-sphingosyl-1,3-cyclic phosphate + ethanolamine. The catalysed reaction is a 1-acyl-sn-glycero-3-phosphocholine = a 1-acyl-sn-glycero-2,3-cyclic phosphate + choline. The enzyme catalyses a 1-acyl-sn-glycero-3-phosphoethanolamine = a 1-acyl-sn-glycero-2,3-cyclic phosphate + ethanolamine. Its function is as follows. Dermonecrotic toxins cleave the phosphodiester linkage between the phosphate and headgroup of certain phospholipids (sphingolipid and lysolipid substrates), forming an alcohol (often choline) and a cyclic phosphate. This toxin acts on sphingomyelin (SM). It may also act on ceramide phosphoethanolamine (CPE), lysophosphatidylcholine (LPC) and lysophosphatidylethanolamine (LPE), but not on lysophosphatidylserine (LPS), and lysophosphatidylglycerol (LPG). It acts by transphosphatidylation, releasing exclusively cyclic phosphate products as second products. Induces dermonecrosis, hemolysis, increased vascular permeability, edema, inflammatory response, and platelet aggregation. This Loxosceles sabina (Tucson recluse spider) protein is Dermonecrotic toxin LsaSicTox-alphaIB1bi.